A 71-amino-acid polypeptide reads, in one-letter code: Small ribosomal subunit protein bS21 (71 aa).

This sequence belongs to the bacterial ribosomal protein bS21 family.

This chain is Small ribosomal subunit protein bS21, found in Buchnera aphidicola subsp. Acyrthosiphon pisum (strain 5A).